The sequence spans 152 residues: Atypical leghemoglobin 2-1 (152 aa).

The region spanning 3–152 (TFSEEQEALV…LAGVIKKGMS (150 aa)) is the Globin domain. Nitrated tyrosine is present on Tyr31. Ser46 contributes to the heme b binding site. Ser46 is subject to Phosphoserine. An O2-binding site is contributed by His64. Residues Lys67, His99, and Arg102 each contribute to the heme b site. The residue at position 140 (Tyr140) is a Nitrated tyrosine.

This sequence belongs to the plant globin family. In terms of assembly, monomer. Nitrated in effective nodules and particularly in hypoxic conditions; this mechanism may play a protective role in the symbiosis by buffering toxic peroxynitrite NO(2)(-). Nitration level decrease during nodule senescence. Post-translationally, phosphorylation at Ser-46 disrupts the molecular environment of its porphyrin ring oxygen binding pocket, thus leading to a reduced oxygen consumption and to the delivery of oxygen O(2) to symbiosomes. As to expression, mainly expressed in leaves and, at low levels, in roots of non-nodulated plants. However, accumulates also in nodules and roots, and, to a lower extent, in leaves, stems, flowers and fruits, in nodulated plants.

Atypical leghemoglobin that reversibly binds oxygen O(2) through a pentacoordinated heme iron. In nodules, facilitates the diffusion of oxygen to the bacteroids while preventing the bacterial nitrogenase from being inactivated by buffering dioxygen, nitric oxide and carbon monoxide. This role is essential for symbiotic nitrogen fixation (SNF). Seems not restricted to symbiotic nitrogen fixation and root nodules formation, but also contributes to general plant development and metabolism. The chain is Atypical leghemoglobin 2-1 from Lotus japonicus (Lotus corniculatus var. japonicus).